The following is an 860-amino-acid chain: Glucans biosynthesis glucosyltransferase H (860 aa).

The next 6 helical transmembrane spans lie at phenylalanine 141–isoleucine 161, valine 187–valine 207, valine 515–leucine 535, leucine 572–tryptophan 592, phenylalanine 599–leucine 619, and phenylalanine 682–isoleucine 702.

It belongs to the glycosyltransferase 2 family. OpgH subfamily.

The protein localises to the cell inner membrane. It participates in glycan metabolism; osmoregulated periplasmic glucan (OPG) biosynthesis. Its function is as follows. Involved in the biosynthesis of osmoregulated periplasmic glucans (OPGs). The sequence is that of Glucans biosynthesis glucosyltransferase H from Pseudomonas paraeruginosa (strain DSM 24068 / PA7) (Pseudomonas aeruginosa (strain PA7)).